The chain runs to 603 residues: Probable NOT transcription complex subunit VIP2 (603 aa).

Composition is skewed to polar residues over residues 1 to 28 and 36 to 70; these read MQGTLTSRNTAINNVPSSGVQQSGNNLS and NLPSALSQIPQGNSHGHSGMTSRGGTSVVGNPGYS. Disordered stretches follow at residues 1–70, 212–242, 306–335, and 355–377; these read MQGT…PGYS, NDGSPFDINDFPQLSSRPSSAGGPQGQLGSL, AGFNLGGTYSSNRPQQQLQHAPSVSSGGVS, and SSHSSYQQQGGGPPGIGLRPLNS. A compositionally biased stretch (polar residues) spans 312 to 335; that stretch reads GTYSSNRPQQQLQHAPSVSSGGVS.

The protein belongs to the CNOT2/3/5 family. In terms of assembly, binds to VIP1. Interacts with Agrobacterium tumefaciens VirE2. Forms a complex made of Agrobacterium VirE2, VIP1, VIP2 and single-stranded DNA (ssDNA).

Its subcellular location is the nucleus. Transcriptional regulator required for Agrobacterium-mediated stable genetic transformation by T-DNA integration in host genome, but not for T-DNA transient expression. The polypeptide is Probable NOT transcription complex subunit VIP2 (VIP2) (Nicotiana benthamiana).